Consider the following 354-residue polypeptide: MSHSHPVRRILSPKDLEIFGASDTKKQVFGFVKVLNYYVVGKGNSYETLKHPIIGKLVAILDKVIDLVAKYPPEDATSSRFGKPEFRDFHQALEENAKDWISDLGELEDWQLVELCTYFAASFGDRTRIDFGSGHELNFICFLFCLRQLGLLDTDSSAAVLTVFVQYLKTMRAVQASYWLEPAGSHGVWGLDDYHFLPFMFGSAQLACHKYLRPLSIHDMEMLDMWKHEYLYMGCIHFINSVKTTASLRWHSPMLDDISGVKTWAKVNQGMVKMYDAEVLSKLPILQHFMFGQLIKAPEGVSPPPDPNAEVQHIHNHWADCCGIKVPSAIAASEMSQKPGDLRKLRGSGVLPFD.

This sequence belongs to the PTPA-type PPIase family.

The protein resides in the cytoplasm. The catalysed reaction is [protein]-peptidylproline (omega=180) = [protein]-peptidylproline (omega=0). In terms of biological role, PPIases accelerate the folding of proteins. It catalyzes the cis-trans isomerization of proline imidic peptide bonds in oligopeptides. Acts as a regulatory subunit for PP2A-like phosphatases modulating their activity or substrate specificity, probably by inducing a conformational change in the catalytic subunit, a direct target of the PPIase. Can reactivate inactive phosphatase PP2A-phosphatase methylesterase complexes (PP2Ai) in presence of ATP and Mg(2+) by dissociating the inactive form from the complex. This Yarrowia lipolytica (strain CLIB 122 / E 150) (Yeast) protein is Serine/threonine-protein phosphatase 2A activator 2 (RRD2).